The sequence spans 418 residues: NADH-quinone oxidoreductase subunit D (418 aa).

This sequence belongs to the complex I 49 kDa subunit family. In terms of assembly, NDH-1 is composed of 14 different subunits. Subunits NuoB, C, D, E, F, and G constitute the peripheral sector of the complex.

It is found in the cell inner membrane. It catalyses the reaction a quinone + NADH + 5 H(+)(in) = a quinol + NAD(+) + 4 H(+)(out). In terms of biological role, NDH-1 shuttles electrons from NADH, via FMN and iron-sulfur (Fe-S) centers, to quinones in the respiratory chain. The immediate electron acceptor for the enzyme in this species is believed to be ubiquinone. Couples the redox reaction to proton translocation (for every two electrons transferred, four hydrogen ions are translocated across the cytoplasmic membrane), and thus conserves the redox energy in a proton gradient. In Neisseria meningitidis serogroup B (strain ATCC BAA-335 / MC58), this protein is NADH-quinone oxidoreductase subunit D.